We begin with the raw amino-acid sequence, 248 residues long: mRNA-decapping protein OPG122 (248 aa).

The 183-residue stretch at His45 to Lys227 folds into the Nudix hydrolase domain. Positions Gly125–Asn147 match the Nudix box motif.

The protein belongs to the Nudix hydrolase family. Interacts with the late transcription elongation factor VLTF-4/OPG110. Interacts with the late transcription factors VLTF-1. Requires Mg(2+) as cofactor. Mn(2+) serves as cofactor.

The protein localises to the host mitochondrion. In terms of biological role, acts with RNA polymerase to initiate transcription from late gene promoters. This chain is mRNA-decapping protein OPG122 (OPG122), found in Cynomys gunnisoni (Gunnison's prairie dog).